Consider the following 367-residue polypeptide: Dual specificity protein phosphatase 1 (367 aa).

Residues 20–137 (RAAQCLLLDC…FSASCPELCS (118 aa)) form the Rhodanese domain. The Tyrosine-protein phosphatase domain occupies 173–314 (GPVEILSFLY…LLQFESQVLA (142 aa)). Cys-258 (phosphocysteine intermediate) is an active-site residue. A phosphoserine; by MAPK1 and MAPK3 mark is found at Ser-359 and Ser-364.

Belongs to the protein-tyrosine phosphatase family. Non-receptor class dual specificity subfamily. Post-translationally, phosphorylation at Ser-359 and Ser-364 by MAPK1/ERK2 and MAPK3/ERK1 reduces its rate of degradation. In terms of processing, 'Lys-48'-linked polyubiquitinated by NEURL3, leading to proteasomal degradation. Brain. High level expression seen in the cingulate gyrus within the retrospinal cortex, ventral and medial divisions of the anterior thalamus and the medial geniculate nucleus. Expressed at moderate levels in the parietal and temporal cortex. Expressed in the cerebellum.

It is found in the nucleus. It carries out the reaction O-phospho-L-tyrosyl-[protein] + H2O = L-tyrosyl-[protein] + phosphate. The catalysed reaction is O-phospho-L-seryl-[protein] + H2O = L-seryl-[protein] + phosphate. It catalyses the reaction O-phospho-L-threonyl-[protein] + H2O = L-threonyl-[protein] + phosphate. Functionally, dual specificity phosphatase that dephosphorylates MAP kinase MAPK1/ERK2 on both 'Thr-183' and 'Tyr-185', regulating its activity during the meiotic cell cycle. In Rattus norvegicus (Rat), this protein is Dual specificity protein phosphatase 1.